Reading from the N-terminus, the 471-residue chain is Light-independent protochlorophyllide reductase subunit N (471 aa).

Positions 22, 47, and 107 each coordinate [4Fe-4S] cluster.

The protein belongs to the BchN/ChlN family. As to quaternary structure, protochlorophyllide reductase is composed of three subunits; ChlL, ChlN and ChlB. Forms a heterotetramer of two ChlB and two ChlN subunits. Requires [4Fe-4S] cluster as cofactor.

It is found in the plastid. The protein localises to the chloroplast. It carries out the reaction chlorophyllide a + oxidized 2[4Fe-4S]-[ferredoxin] + 2 ADP + 2 phosphate = protochlorophyllide a + reduced 2[4Fe-4S]-[ferredoxin] + 2 ATP + 2 H2O. The protein operates within porphyrin-containing compound metabolism; chlorophyll biosynthesis (light-independent). Component of the dark-operative protochlorophyllide reductase (DPOR) that uses Mg-ATP and reduced ferredoxin to reduce ring D of protochlorophyllide (Pchlide) to form chlorophyllide a (Chlide). This reaction is light-independent. The NB-protein (ChlN-ChlB) is the catalytic component of the complex. The protein is Light-independent protochlorophyllide reductase subunit N of Huperzia lucidula (Shining clubmoss).